The chain runs to 249 residues: Dihydroneopterin 2',3'-cyclic phosphate phosphodiesterase (249 aa).

The 115-residue stretch at 58-172 folds into the HD domain; the sequence is LIEHTISVTK…VHYADEADSK (115 aa).

In terms of assembly, homododecamer. Requires Fe(2+) as cofactor. Zn(2+) is required as a cofactor.

It catalyses the reaction 7,8-dihydroneopterin 2',3'-cyclic phosphate + H2O = 7,8-dihydroneopterin 3'-phosphate + H(+). The catalysed reaction is 7,8-dihydroneopterin 2',3'-cyclic phosphate + H2O = 7,8-dihydroneopterin 2'-phosphate + H(+). It functions in the pathway cofactor biosynthesis; 5,6,7,8-tetrahydromethanopterin biosynthesis. In terms of biological role, cyclic phosphodiesterase that hydrolyzes the cyclic phosphate of 7,8-dihydroneopterin 2',3'-cyclic phosphate (H2N-cP) and converts it to a mixture of 7,8-dihydroneopterin 2'-phosphate (H2N-2'P) and 7,8-dihydroneopterin 3'-phosphate (H2N-3'P). Is also able to utilize other phosphodiesters as substrates in vitro: hydrolysis of bis-pNPP and pNPPC produces nitrophenyl phosphate, and that of 2',3'-cAMP produces 3'-AMP. ATP, 3',5'-cAMP, GTP, 3',5'-cGMP, and 4',5'-cFMN cannot serve as substrates. This is Dihydroneopterin 2',3'-cyclic phosphate phosphodiesterase (mptB) from Methanocaldococcus jannaschii (strain ATCC 43067 / DSM 2661 / JAL-1 / JCM 10045 / NBRC 100440) (Methanococcus jannaschii).